We begin with the raw amino-acid sequence, 336 residues long: Holliday junction branch migration complex subunit RuvB (336 aa).

Positions 4–184 (ADRLISAGTT…FGIVQRLEFY (181 aa)) are large ATPase domain (RuvB-L). Residues isoleucine 23, arginine 24, glycine 65, lysine 68, threonine 69, threonine 70, 131–133 (EDY), arginine 174, tyrosine 184, and arginine 221 contribute to the ATP site. Threonine 69 contributes to the Mg(2+) binding site. Residues 185–255 (QVPDLQYIVS…IAAQALDMLN (71 aa)) form a small ATPAse domain (RuvB-S) region. The tract at residues 258–336 (AEGFDYMDRK…HFGITPPEMP (79 aa)) is head domain (RuvB-H). The DNA site is built by arginine 294, arginine 313, and arginine 318.

It belongs to the RuvB family. As to quaternary structure, homohexamer. Forms an RuvA(8)-RuvB(12)-Holliday junction (HJ) complex. HJ DNA is sandwiched between 2 RuvA tetramers; dsDNA enters through RuvA and exits via RuvB. An RuvB hexamer assembles on each DNA strand where it exits the tetramer. Each RuvB hexamer is contacted by two RuvA subunits (via domain III) on 2 adjacent RuvB subunits; this complex drives branch migration. In the full resolvosome a probable DNA-RuvA(4)-RuvB(12)-RuvC(2) complex forms which resolves the HJ.

Its subcellular location is the cytoplasm. The enzyme catalyses ATP + H2O = ADP + phosphate + H(+). Its function is as follows. The RuvA-RuvB-RuvC complex processes Holliday junction (HJ) DNA during genetic recombination and DNA repair, while the RuvA-RuvB complex plays an important role in the rescue of blocked DNA replication forks via replication fork reversal (RFR). RuvA specifically binds to HJ cruciform DNA, conferring on it an open structure. The RuvB hexamer acts as an ATP-dependent pump, pulling dsDNA into and through the RuvAB complex. RuvB forms 2 homohexamers on either side of HJ DNA bound by 1 or 2 RuvA tetramers; 4 subunits per hexamer contact DNA at a time. Coordinated motions by a converter formed by DNA-disengaged RuvB subunits stimulates ATP hydrolysis and nucleotide exchange. Immobilization of the converter enables RuvB to convert the ATP-contained energy into a lever motion, pulling 2 nucleotides of DNA out of the RuvA tetramer per ATP hydrolyzed, thus driving DNA branch migration. The RuvB motors rotate together with the DNA substrate, which together with the progressing nucleotide cycle form the mechanistic basis for DNA recombination by continuous HJ branch migration. Branch migration allows RuvC to scan DNA until it finds its consensus sequence, where it cleaves and resolves cruciform DNA. In Shigella flexneri serotype 5b (strain 8401), this protein is Holliday junction branch migration complex subunit RuvB.